We begin with the raw amino-acid sequence, 246 residues long: Envelope glycoprotein L (246 aa).

The signal sequence occupies residues 1–19 (MKTNIFFIFLISILNQIYA). Residues 29 to 235 (LEQECIKNIL…EKYNEVLPFR (207 aa)) enclose the gL betaherpesvirus-type domain. Cys134 and Cys139 are joined by a disulfide.

It belongs to the herpesviridae glycoprotein L (gL) family. Betaherpesvirinae gL subfamily. As to quaternary structure, interacts with glycoprotein H (gH); this interaction is necessary for the correct processing and cell surface expression of gH.

Its subcellular location is the virion membrane. It localises to the host cell membrane. The protein localises to the host Golgi apparatus. The protein resides in the host trans-Golgi network. Its function is as follows. The heterodimer glycoprotein H-glycoprotein L is required for the fusion of viral and plasma membranes leading to virus entry into the host cell. Acts as a functional inhibitor of gH and maintains gH in an inhibited form. Upon binding to host integrins, gL dissociates from gH leading to activation of the viral fusion glycoproteins gB and gH. This Homo sapiens (Human) protein is Envelope glycoprotein L.